A 130-amino-acid polypeptide reads, in one-letter code: Small ribosomal subunit protein uS8 (130 aa).

Belongs to the universal ribosomal protein uS8 family. Part of the 30S ribosomal subunit.

Its function is as follows. One of the primary rRNA binding proteins, it binds directly to 16S rRNA central domain where it helps coordinate assembly of the platform of the 30S subunit. The polypeptide is Small ribosomal subunit protein uS8 (Methanococcus maripaludis (strain C7 / ATCC BAA-1331)).